A 547-amino-acid polypeptide reads, in one-letter code: Tripartite motif-containing protein 5 (547 aa).

Ala-2 carries the post-translational modification N-acetylalanine. The segment at 15-59 adopts an RING-type zinc-finger fold; that stretch reads CPICLDLLTEPLSLDCGHSFCQACITADHKESTLHQGERSCPLCR. Phosphoserine is present on Ser-86. The B box-type zinc-finger motif lies at 91–132; it reads QKVDRCARHGEKLLLFCQQHGNVICWLCERSQEHRGHSTFLV. Zn(2+)-binding residues include Cys-96, His-99, Cys-118, and His-124. Residues 132–224 adopt a coiled-coil conformation; sequence VEEVAQKYRE…LAQSENDMVL (93 aa). The required for interaction with GABARAP and for autophagy stretch occupies residues 186-199; sequence FKQLRDILDCEESN. One can recognise a B30.2/SPRY domain in the interval 280–547; it reads PNLKGMLQVF…LPMTLCSPSS (268 aa).

Belongs to the TRIM/RBCC family. As to quaternary structure, can form homodimers and homotrimers. In addition to lower-order dimerization, also exhibits a higher-order multimerization and both low- and high-order multimerizations are essential for its restriction activity. Interacts with BTBD1 and BTBD2. Interacts with PSMC4, PSMC5, PSMD7 and HSPA8/HSC70. Interacts (via B30.2/SPRY domain) with HSPA1A/B. Interacts with PSMC2, MAP3K7/TAK1, TAB2 and TAB3. Interacts with SQSTM1. Interacts with TRIM6 and TRIM34. Interacts with ULK1 (phosphorylated form), GABARAP, GABARAPL1, GABARAPL2, MAP1LC3A, MAP1LC3C and BECN1. Post-translationally, degraded in a proteasome-independent fashion in the absence of viral infection but in a proteasome-dependent fashion following exposure to restriction sensitive virus. Autoubiquitinated in a RING finger- and UBE2D2-dependent manner. Monoubiquitinated by TRIM21. Deubiquitinated by Yersinia YopJ. Ubiquitination may not lead to proteasomal degradation.

The protein localises to the cytoplasm. The protein resides in the nucleus. It carries out the reaction S-ubiquitinyl-[E2 ubiquitin-conjugating enzyme]-L-cysteine + [acceptor protein]-L-lysine = [E2 ubiquitin-conjugating enzyme]-L-cysteine + N(6)-ubiquitinyl-[acceptor protein]-L-lysine.. It functions in the pathway protein modification; protein ubiquitination. Functionally, capsid-specific restriction factor that prevents infection from non-host-adapted retroviruses. Blocks viral replication early in the life cycle, after viral entry but before reverse transcription. In addition to acting as a capsid-specific restriction factor, also acts as a pattern recognition receptor that activates innate immune signaling in response to the retroviral capsid lattice. Binding to the viral capsid triggers its E3 ubiquitin ligase activity, and in concert with the heterodimeric ubiquitin conjugating enzyme complex UBE2V1-UBE2N (also known as UBC13-UEV1A complex) generates 'Lys-63'-linked polyubiquitin chains, which in turn are catalysts in the autophosphorylation of the MAP3K7/TAK1 complex (includes TAK1, TAB2, and TAB3). Activation of the MAP3K7/TAK1 complex by autophosphorylation results in the induction and expression of NF-kappa-B and MAPK-responsive inflammatory genes, thereby leading to an innate immune response in the infected cell. Plays a role in regulating autophagy through activation of autophagy regulator BECN1 by causing its dissociation from its inhibitors BCL2 and TAB2. The sequence is that of Tripartite motif-containing protein 5 (TRIM5) from Lagothrix lagotricha (Brown woolly monkey).